A 1191-amino-acid chain; its full sequence is Putative glycoside hydrolase 22789 (1191 aa).

Over residues Pro173 to Ala187 the composition is skewed to low complexity. The interval Pro173–Lys221 is disordered.

Belongs to the glycoside hydrolase-like 3 (GHL3) family.

This Monosiga brevicollis (Choanoflagellate) protein is Putative glycoside hydrolase 22789.